A 336-amino-acid polypeptide reads, in one-letter code: Phenylalanine--tRNA ligase alpha subunit (336 aa).

Glu259 contacts Mg(2+).

Belongs to the class-II aminoacyl-tRNA synthetase family. Phe-tRNA synthetase alpha subunit type 1 subfamily. As to quaternary structure, tetramer of two alpha and two beta subunits. Mg(2+) serves as cofactor.

The protein resides in the cytoplasm. The enzyme catalyses tRNA(Phe) + L-phenylalanine + ATP = L-phenylalanyl-tRNA(Phe) + AMP + diphosphate + H(+). This chain is Phenylalanine--tRNA ligase alpha subunit, found in Tropheryma whipplei (strain Twist) (Whipple's bacillus).